Reading from the N-terminus, the 570-residue chain is Phosphoenolpyruvate-protein phosphotransferase (570 aa).

Catalysis depends on histidine 189, which acts as the Tele-phosphohistidine intermediate. Positions 296 and 332 each coordinate phosphoenolpyruvate. Positions 431 and 455 each coordinate Mg(2+). Phosphoenolpyruvate is bound by residues 454–455 (ND) and arginine 465. Cysteine 502 acts as the Proton donor in catalysis.

It belongs to the PEP-utilizing enzyme family. As to quaternary structure, homodimer. Mg(2+) is required as a cofactor.

It localises to the cytoplasm. It carries out the reaction L-histidyl-[protein] + phosphoenolpyruvate = N(pros)-phospho-L-histidyl-[protein] + pyruvate. In terms of biological role, general (non sugar-specific) component of the phosphoenolpyruvate-dependent sugar phosphotransferase system (sugar PTS). This major carbohydrate active-transport system catalyzes the phosphorylation of incoming sugar substrates concomitantly with their translocation across the cell membrane. Enzyme I transfers the phosphoryl group from phosphoenolpyruvate (PEP) to the phosphoryl carrier protein (HPr). This chain is Phosphoenolpyruvate-protein phosphotransferase (ptsI), found in Buchnera aphidicola subsp. Schizaphis graminum (strain Sg).